The primary structure comprises 343 residues: Lumican (343 aa).

Residues 1–18 form the signal peptide; sequence MTLNSLPIFLVLISGIFC. The residue at position 19 (glutamine 19) is a Pyrrolidone carboxylic acid. Sulfotyrosine is present on residues tyrosine 20 and tyrosine 22. The 39-residue stretch at 31 to 69 folds into the LRRNT domain; the sequence is DPFGPSTAVCAPECNCPLSYPTAMYCDNLKLKTIPIVPS. LRR repeat units lie at residues 70–91, 94–117, 120–140, 141–162, 165–186, 190–211, 212–232, and 235–255; these read GIKYLYLRNNMIESIEENTFDN, DLQWLILDHNHLENSKIKGRVFSK, NLKKLHINYNNLTEAVGPLPK, TLDDLQLSHNKITKVNPGALEG, NLTVIHLQNNQLKADSISGAFK, SLLYLDLSFNQLTKLPTGLPHS, LLMLYFDNNQISNIPDEYFQG, and TLQYLRLSHNKLTDSGIPGNV. A glycan (N-linked (GlcNAc...) (keratan sulfate) asparagine) is linked at asparagine 91. N-linked (GlcNAc...) (keratan sulfate) asparagine glycosylation is present at asparagine 130. Asparagine 165 carries an N-linked (GlcNAc...) (keratan sulfate) asparagine glycan. An N-linked (GlcNAc...) (keratan sulfate) asparagine glycan is attached at asparagine 257. 3 LRR repeats span residues 260 to 281, 282 to 301, and 310 to 330; these read SLVELDLSFNQLKSIPTVSENL, ENFYLQVNKINKFPLSSFCK, and KITHLRLDGNNLTRADLPQEM. A disulfide bridge connects residues cysteine 300 and cysteine 333. N-linked (GlcNAc...) asparagine glycosylation is present at asparagine 320.

Belongs to the small leucine-rich proteoglycan (SLRP) family. SLRP class II subfamily. As to quaternary structure, binds to laminin. Post-translationally, contains keratan sulfate.

It localises to the secreted. It is found in the extracellular space. The protein resides in the extracellular matrix. In Coturnix japonica (Japanese quail), this protein is Lumican (LUM).